The following is a 256-amino-acid chain: Small ribosomal subunit protein eS1 (256 aa).

Ala-2 carries the post-translational modification N-acetylalanine; partial.

Belongs to the eukaryotic ribosomal protein eS1 family. Component of the small ribosomal subunit. Mature ribosomes consist of a small (40S) and a large (60S) subunit. The 40S subunit contains about 33 different proteins and 1 molecule of RNA (18S). The 60S subunit contains about 49 different proteins and 3 molecules of RNA (25S, 5.8S and 5S).

Its subcellular location is the cytoplasm. The sequence is that of Small ribosomal subunit protein eS1 from Meyerozyma guilliermondii (strain ATCC 6260 / CBS 566 / DSM 6381 / JCM 1539 / NBRC 10279 / NRRL Y-324) (Yeast).